The sequence spans 180 residues: UPF0227 protein YE1706 (180 aa).

This sequence belongs to the UPF0227 family.

This chain is UPF0227 protein YE1706, found in Yersinia enterocolitica serotype O:8 / biotype 1B (strain NCTC 13174 / 8081).